A 557-amino-acid polypeptide reads, in one-letter code: MSNPRHNEREVRSPRGDELNAKSWLTEAPLRMLMNNLDPDVAERPHELVVYGGIGRAARTWDDFDRIVATLKTLNDDETLLVQSGKPVGVFRTHKDAPRVLIANSNLVPHWANWDHFNELDKKGLAMYGQMTAGSWIYIGAQGIVQGTYETFVEAGRQHYGGNLKGRWILTGGLGGMGGAQPLAAVMAGACCLAVECDETRADFRLRTRYVDEKTHSLDEALAKIDAWTKAGEAKSIALIGNAAEIFPELVKRGVKPDIVTDQTSAHDPVHGYLPLGWTVAEWRAKQENDPKVVEKAARASMKVQVQAMLDFWNAGIPTVDYGNNIRQMALEEGLENAFAFPGFVPAYIRPLFCRGIGPFRWAALSGDPEDIAKTDAKVKELLPDNKHLHNWLDMAKERIAFQGLPARICWVGLGDRHRLGLAFNEMVRNGELKAPIVIGRDHLDSGSVASPNRETEAMKDGSDAVSDWPLLNALLNTASGATWVSLHHGGGVGMGFSQHAGMVICCDGTEDADRRLERVLWNDPATGVMRHADAGYDIALDWARKQGLRLPAILGN.

The disordered stretch occupies residues Met1–Asn20. NAD(+) contacts are provided by residues Gly52 to Gly53, Gln130, Gly176 to Gly178, Glu196, Arg201, Asn242 to Ala243, Gln263 to His267, Tyr273 to Leu274, and Tyr322. Residue Cys410 is part of the active site. Gly492 is a binding site for NAD(+).

This sequence belongs to the urocanase family. The cofactor is NAD(+).

The protein resides in the cytoplasm. The catalysed reaction is 4-imidazolone-5-propanoate = trans-urocanate + H2O. It functions in the pathway amino-acid degradation; L-histidine degradation into L-glutamate; N-formimidoyl-L-glutamate from L-histidine: step 2/3. Functionally, catalyzes the conversion of urocanate to 4-imidazolone-5-propionate. This chain is Urocanate hydratase, found in Brucella melitensis biotype 1 (strain ATCC 23456 / CCUG 17765 / NCTC 10094 / 16M).